A 159-amino-acid chain; its full sequence is Trafficking protein particle complex subunit 6A (159 aa).

At Ser33 the chain carries Phosphoserine.

Belongs to the TRAPP small subunits family. BET3 subfamily. In terms of assembly, part of the multisubunit transport protein particle (TRAPP) complex. Heterodimer with TRAPPC3. The heterodimer TRAPPC3-TRAPPC6A interacts with TRAPPC2L. Interacts with TRAPPC2L. In terms of tissue distribution, ubiquitous, with lowest expression in skeletal muscle and brain and highest in kidney, liver and testis, as well as in cultured melanocytes.

The protein resides in the golgi apparatus. Its subcellular location is the cis-Golgi network. The protein localises to the endoplasmic reticulum. May play a role in vesicular transport during the biogenesis of melanosomes. The protein is Trafficking protein particle complex subunit 6A of Mus musculus (Mouse).